Consider the following 317-residue polypeptide: N-acetylmuramoyl-L-alanine amidase XlyB (317 aa).

The signal sequence occupies residues 1–39; that stretch reads MSIPVKKNLVSEAKYALKCPNAMSAEYITIHNTANDASA. An N-acetylmuramoyl-L-alanine amidase domain is found at 40-142; sequence ANEISYMIGN…QDWSGKYCPH (103 aa). A LysM domain is found at 177-221; sequence SEYHVKKGDTLSGIAASHGASVKTLQSINHITDPNHIKIGQVIKL.

It belongs to the N-acetylmuramoyl-L-alanine amidase 2 family.

The protein localises to the secreted. The enzyme catalyses Hydrolyzes the link between N-acetylmuramoyl residues and L-amino acid residues in certain cell-wall glycopeptides.. Autolysins are involved in some important biological processes such as cell separation, cell-wall turnover, competence for genetic transformation, formation of the flagella and sporulation. This chain is N-acetylmuramoyl-L-alanine amidase XlyB (xlyB), found in Bacillus subtilis (strain 168).